Consider the following 363-residue polypeptide: Dihydroorotate dehydrogenase (quinone) (363 aa).

FMN-binding positions include 77-81 and Thr-101; that span reads AGMDK. Substrate is bound at residue Lys-81. Residue 126–130 participates in substrate binding; the sequence is NRMGF. FMN contacts are provided by Ser-155 and Asn-188. Residue Asn-188 participates in substrate binding. The active-site Nucleophile is Ser-191. Asn-193 lines the substrate pocket. Positions 234 and 262 each coordinate FMN. Substrate is bound at residue 263-264; that stretch reads NT. Residues Gly-287, Gly-316, and 337–338 contribute to the FMN site; that span reads YT.

This sequence belongs to the dihydroorotate dehydrogenase family. Type 2 subfamily. Monomer. Requires FMN as cofactor.

It is found in the cell membrane. The enzyme catalyses (S)-dihydroorotate + a quinone = orotate + a quinol. It participates in pyrimidine metabolism; UMP biosynthesis via de novo pathway; orotate from (S)-dihydroorotate (quinone route): step 1/1. In terms of biological role, catalyzes the conversion of dihydroorotate to orotate with quinone as electron acceptor. This is Dihydroorotate dehydrogenase (quinone) from Chloroflexus aurantiacus (strain ATCC 29366 / DSM 635 / J-10-fl).